The chain runs to 330 residues: D-alanine--D-alanine ligase (330 aa).

In terms of domain architecture, ATP-grasp spans 120–326 (KLWLSALDIP…FKQFLEGIIR (207 aa)). Residue 150 to 205 (AFRNWGAVFVKAASQGSSVGCYKVTDAAKLSEAVNAAFGYSDQVLVEKAVRPRELE) coordinates ATP. The Mg(2+) site is built by aspartate 280, glutamate 293, and asparagine 295.

The protein belongs to the D-alanine--D-alanine ligase family. Requires Mg(2+) as cofactor. Mn(2+) serves as cofactor.

The protein localises to the cytoplasm. It carries out the reaction 2 D-alanine + ATP = D-alanyl-D-alanine + ADP + phosphate + H(+). It functions in the pathway cell wall biogenesis; peptidoglycan biosynthesis. In terms of biological role, cell wall formation. The chain is D-alanine--D-alanine ligase from Tolumonas auensis (strain DSM 9187 / NBRC 110442 / TA 4).